Here is a 321-residue protein sequence, read N- to C-terminus: MRVSQVYRWQIPMDAGVVLRERRLKTRDGLFIRLQEDEREGWGEISPLPGFSNETLEEAQTALLAWAQAWRDGAEPPLPTLPSVAFGISCAQAELYGELPQAADYRAAPLCSGDPDELFAKLAAMPGEKVAKVKVGLWEAVRDGMVVNLLLEAIPDLQLRLDANRAWTPLKAQQFAKYVNPAYRQRIAFLEEPCKTREDSRAFSRETGIAIAWDESLREADFRFVAEPGVRAVVIKPTLTGSVQKVQQQVAAAHALGLSAVISSSIESSLGLTQLARVAAWLTPQTIPGLDTLALMSAQLVRPWPESTLPMINIDALEPLL.

The active-site Proton donor is the K134. Residues D162, E191, and D214 each contribute to the Mg(2+) site. K236 serves as the catalytic Proton acceptor.

Belongs to the mandelate racemase/muconate lactonizing enzyme family. MenC type 1 subfamily. A divalent metal cation is required as a cofactor.

It catalyses the reaction (1R,6R)-6-hydroxy-2-succinyl-cyclohexa-2,4-diene-1-carboxylate = 2-succinylbenzoate + H2O. It functions in the pathway quinol/quinone metabolism; 1,4-dihydroxy-2-naphthoate biosynthesis; 1,4-dihydroxy-2-naphthoate from chorismate: step 4/7. The protein operates within quinol/quinone metabolism; menaquinone biosynthesis. Functionally, converts 2-succinyl-6-hydroxy-2,4-cyclohexadiene-1-carboxylate (SHCHC) to 2-succinylbenzoate (OSB). This chain is o-succinylbenzoate synthase, found in Klebsiella pneumoniae (strain 342).